We begin with the raw amino-acid sequence, 464 residues long: Fumarate hydratase class II (464 aa).

Residues 98-100, arginine 126, 129-132, 139-141, and threonine 187 each bind substrate; these read SGT, HPND, and SSN. Histidine 188 serves as the catalytic Proton donor/acceptor. The active site involves serine 318. Residues serine 319 and 324 to 326 each bind substrate; that span reads KVN.

Belongs to the class-II fumarase/aspartase family. Fumarase subfamily. In terms of assembly, homotetramer.

It is found in the cytoplasm. It catalyses the reaction (S)-malate = fumarate + H2O. The protein operates within carbohydrate metabolism; tricarboxylic acid cycle; (S)-malate from fumarate: step 1/1. Involved in the TCA cycle. Catalyzes the stereospecific interconversion of fumarate to L-malate. The sequence is that of Fumarate hydratase class II from Photorhabdus laumondii subsp. laumondii (strain DSM 15139 / CIP 105565 / TT01) (Photorhabdus luminescens subsp. laumondii).